A 212-amino-acid polypeptide reads, in one-letter code: Ribosomal RNA small subunit methyltransferase G (212 aa).

S-adenosyl-L-methionine-binding positions include glycine 80, leucine 85, 131 to 132, and arginine 146; that span reads AE.

Belongs to the methyltransferase superfamily. RNA methyltransferase RsmG family.

The protein localises to the cytoplasm. The enzyme catalyses guanosine(527) in 16S rRNA + S-adenosyl-L-methionine = N(7)-methylguanosine(527) in 16S rRNA + S-adenosyl-L-homocysteine. In terms of biological role, specifically methylates the N7 position of guanine in position 527 of 16S rRNA. The polypeptide is Ribosomal RNA small subunit methyltransferase G (Xanthomonas campestris pv. campestris (strain B100)).